Reading from the N-terminus, the 410-residue chain is Transcription factor rglT (410 aa).

Positions 1-24 (MQFDSLPLPPSSSHDTTSVPPLKR) are disordered. The zn(2)-C6 fungal-type DNA-binding region spans 28-55 (CDECRKRKLKCSGEATGCSRCLKQSLPC). The segment at 353–372 (HRTRTVESPNEPGSCSPVSH) is disordered. The segment covering 358–369 (VESPNEPGSCSP) has biased composition (polar residues).

It is found in the nucleus. In terms of biological role, transcription factor that is involved in protection against oxidative stress. Binds to promoter regions of the gliotoxin (GT) biosynthetic genes gliZ, gliF, gliT, gliM, gliA and gtmA. Two related but different DNA motifs (5'-TCGG-3' and 5'-CGGNCGG-3') are specifically enriched among rglT binding sites in GT-inducing conditions. Also indirectly regulates the expression of gliP, gliG, gliH and gliN. Plays a key role in resistance against exogenously-added GT and GT biosynthesis, mainly through the direct regulation of gliT. Furthermore, rglT is important for virulence in chemotherapeutic mice with invasive pulmonary aspergillosis (IPA). This Aspergillus fumigatus (strain CBS 144.89 / FGSC A1163 / CEA10) (Neosartorya fumigata) protein is Transcription factor rglT.